We begin with the raw amino-acid sequence, 407 residues long: Peptidase T (407 aa).

H82 contacts Zn(2+). D84 is an active-site residue. A Zn(2+)-binding site is contributed by D143. Catalysis depends on E177, which acts as the Proton acceptor. 3 residues coordinate Zn(2+): E178, D200, and H382.

The protein belongs to the peptidase M20B family. Requires Zn(2+) as cofactor.

Its subcellular location is the cytoplasm. The catalysed reaction is Release of the N-terminal residue from a tripeptide.. In terms of biological role, cleaves the N-terminal amino acid of tripeptides. This is Peptidase T from Streptococcus thermophilus (strain CNRZ 1066).